The primary structure comprises 281 residues: General control transcription factor GCN4 (281 aa).

At Ser17 the chain carries Phosphoserine. Required for transcriptional activation regions lie at residues 89-100 and 106-125; these read LDDAVVESFFSS and PMFEYENLEDNSKEWTSLFD. Phosphothreonine; by PHO85 is present on Thr165. The short motif at 167 to 200 is the Nuclear localization signal element; it reads VLEDAKLTQTRKVKKPNSVVKKSHHVGKDDESRL. The segment at 217–248 is disordered; it reads LSPIVPESSDPAALKRARNTEAARRSRARKLQ. Ser218 is subject to Phosphoserine. The bZIP domain occupies 225–281; the sequence is SDPAALKRARNTEAARRSRARKLQRMKQLEDKVEELLSKNYHLENEVARLKKLVGER. The short motif at 231–249 is the Nuclear localization signal element; the sequence is KRARNTEAARRSRARKLQR. Positions 231–251 are basic motif; that stretch reads KRARNTEAARRSRARKLQRMK. Residues 253–274 form a leucine-zipper region; that stretch reads LEDKVEELLSKNYHLENEVARL.

It belongs to the bZIP family. GCN4 subfamily. As to quaternary structure, homodimer. Each subunit binds overlapping and non-identical half-sites that flank the central CG base-pair in the pseudo-palindromic motif 5'-ATGA[CG]TCAT-3'. Interacts with the mediator tail; the interaction with GAL11/MED15 is direct. Interacts with the SAGA histone acetyltransferase complex. Interacts with the SWI/SNF chromatin remodeling complex. In terms of processing, phosphorylated by the cyclin-CDK PCL5-PHO85. Phosphorylation of Thr-165 induces degradation of GCN4 by the E3 ubiquitin ligase complex SCF(Cdc4).

Its subcellular location is the nucleus. Master transcriptional regulator that mediates the response to amino acid starvation. Binds variations of the DNA sequence 5'-ATGA[CG]TCAT-3' in canonical nucleosome-depleted 5'-positioned promoters, and also within coding sequences and 3' non-coding regions. During nutrient starvation (low or poor amino acid, carbon or purine sources), it activates genes required for amino acid biosynthesis and transport, autophagy, cofactor biosynthesis and transport, mitochondrial transport, and additional downstream transcription factors. Activates transcription by recruiting multiple coactivators, including the mediator complex, the SAGA complex, and the SWI/SNF complex, to enable assembly of the pre-initiation complex at core promoters. The chain is General control transcription factor GCN4 from Saccharomyces cerevisiae (strain ATCC 204508 / S288c) (Baker's yeast).